A 714-amino-acid chain; its full sequence is Pre-mRNA-splicing factor CLF1 (714 aa).

12 HAT repeats span residues 48–80, 83–115, 117–149, 151–182, 184–215, 265–305, 315–347, 349–384, 394–430, 435–470, 472–510, and 555–586; these read SFQLTKRKEYEQQLNKNRLNFGQWLRYAKWEVK, HDFPRARSIFERALEVNVQHIPFWTHYIQFELS, KNITHARNLLDRAVTTLPRVDKLWFLYVQTEET, KNYQMVRIIFERWLSWNPNPSAWDAYINYEKR, DEYDNAREIYIRYVQIHSSGEIWLKWIDFEMN, KEYE…FEKS, SIMIKRKLKYEEEVNKSPSDYDSWWSYISILQQ, DNNEVTRETFERAIKVIPTDAFKSTVWRRYIYIWVK, GSIENGRNIWNKALKVIPHKRFTFAKIWISFAQFEIR, NGLASARKILGRSIGQSSTVKPKRKLFKFYIELEQK, GEWDRVRKLYEKWLELSLVGENNLSTINSLLTYIDFEKN, and MRYAEARSLYRKLVERVSTPKVWISFALFESS.

This sequence belongs to the crooked-neck family. In terms of assembly, associated with the spliceosome.

The protein localises to the nucleus. Involved in pre-mRNA splicing and cell cycle progression. Required for the spliceosome assembly and initiation of the DNA replication. The sequence is that of Pre-mRNA-splicing factor CLF1 (CLF1) from Debaryomyces hansenii (strain ATCC 36239 / CBS 767 / BCRC 21394 / JCM 1990 / NBRC 0083 / IGC 2968) (Yeast).